The chain runs to 513 residues: Probable DNA ligase (513 aa).

Glu213 serves as a coordination point for ATP. Residue Lys215 is the N6-AMP-lysine intermediate of the active site. Positions 220, 235, 264, 304, 376, and 382 each coordinate ATP.

The protein belongs to the ATP-dependent DNA ligase family. It depends on Mg(2+) as a cofactor.

It carries out the reaction ATP + (deoxyribonucleotide)n-3'-hydroxyl + 5'-phospho-(deoxyribonucleotide)m = (deoxyribonucleotide)n+m + AMP + diphosphate.. Its function is as follows. DNA ligase that seals nicks in double-stranded DNA during DNA replication, DNA recombination and DNA repair. In Anaeromyxobacter dehalogenans (strain 2CP-1 / ATCC BAA-258), this protein is Probable DNA ligase.